The sequence spans 736 residues: Phosphoribosylformylglycinamidine synthase subunit PurL (736 aa).

Residue His48 is part of the active site. ATP is bound by residues Tyr51 and Lys90. Glu92 contacts Mg(2+). Substrate is bound by residues 93-96 (SHNH) and Arg115. His94 serves as the catalytic Proton acceptor. Mg(2+) is bound at residue Asp116. Position 239 (Gln239) interacts with substrate. Asp267 contacts Mg(2+). Residue 311 to 313 (ESQ) coordinates substrate. Residues Asp492 and Gly529 each contribute to the ATP site. Asn530 lines the Mg(2+) pocket. Ser532 is a binding site for substrate.

The protein belongs to the FGAMS family. Monomer. Part of the FGAM synthase complex composed of 1 PurL, 1 PurQ and 2 PurS subunits.

It is found in the cytoplasm. It catalyses the reaction N(2)-formyl-N(1)-(5-phospho-beta-D-ribosyl)glycinamide + L-glutamine + ATP + H2O = 2-formamido-N(1)-(5-O-phospho-beta-D-ribosyl)acetamidine + L-glutamate + ADP + phosphate + H(+). The protein operates within purine metabolism; IMP biosynthesis via de novo pathway; 5-amino-1-(5-phospho-D-ribosyl)imidazole from N(2)-formyl-N(1)-(5-phospho-D-ribosyl)glycinamide: step 1/2. In terms of biological role, part of the phosphoribosylformylglycinamidine synthase complex involved in the purines biosynthetic pathway. Catalyzes the ATP-dependent conversion of formylglycinamide ribonucleotide (FGAR) and glutamine to yield formylglycinamidine ribonucleotide (FGAM) and glutamate. The FGAM synthase complex is composed of three subunits. PurQ produces an ammonia molecule by converting glutamine to glutamate. PurL transfers the ammonia molecule to FGAR to form FGAM in an ATP-dependent manner. PurS interacts with PurQ and PurL and is thought to assist in the transfer of the ammonia molecule from PurQ to PurL. The sequence is that of Phosphoribosylformylglycinamidine synthase subunit PurL from Bradyrhizobium diazoefficiens (strain JCM 10833 / BCRC 13528 / IAM 13628 / NBRC 14792 / USDA 110).